The primary structure comprises 394 residues: 2-aminobenzenesulfonate 2,3-dioxygenase subunit alpha (394 aa).

Residues 43–154 (WKFVCHVSEI…TETYLGLVFV (112 aa)) form the Rieske domain. [2Fe-2S] cluster contacts are provided by Cys-85, His-87, Cys-105, and His-108. Fe cation contacts are provided by His-209 and His-213.

Belongs to the bacterial ring-hydroxylating dioxygenase alpha subunit family. As to quaternary structure, heterotetramer with a alpha2beta2 structure. Requires [2Fe-2S] cluster as cofactor. Fe cation is required as a cofactor.

The catalysed reaction is 2-aminobenzenesulfonate + NADH + O2 + 2 H(+) = 2,3-dihydroxybenzenesulfonate + NH4(+) + NAD(+). Inhibited by o-phenanthroline. Functionally, alpha subunit of the oxygenase component of the 2-aminobenzenesulfonate 2,3-dioxygenase system (deaminating) (ABSDOS). Can use 2-aminobenzenesulfonate (ABS), benzenesulfonate (BS), 4-toluenesulfonate (TS), 2-nitrobenzenesulfonate, 3- and 4-aminobenzenesulfonates, 4-chloro- and 4-hydroxybenzenesulfonates and pyridine-3-sulfonate as substrates. No desulfonation of ABS to aminocatechol or aminophenol detected. The sequence is that of 2-aminobenzenesulfonate 2,3-dioxygenase subunit alpha from Alcaligenes sp.